A 480-amino-acid polypeptide reads, in one-letter code: Oxysterol-binding protein-related protein 2 (480 aa).

The tract at residues 1-60 is disordered; the sequence is MNGEEEFFDAVTGFDSDNSSGEFSEANQKVTGMIDLDTSKNNRIGKTGERPSQENGIQKH. The span at 15-30 shows a compositional bias: polar residues; that stretch reads DSDNSSGEFSEANQKV. 2 positions are modified to phosphoserine: S19 and S20. A 1,2-diacyl-sn-glycero-3-phospho-(1D-myo-inositol-4,5-bisphosphate) is bound by residues K90, 178-179, and 427-431; these read HH and EEKQR.

Belongs to the OSBP family. Monomer. Homotetramer; phosphatidylinositol-4,5-bisphosphate binding promotes formation of stable tetramers. Interacts with DIAPH1. In terms of tissue distribution, widely expressed.

The protein resides in the cytoplasm. It localises to the cytosol. The protein localises to the lipid droplet. Its subcellular location is the cell membrane. Intracellular transport protein that binds sterols and phospholipids and mediates lipid transport between intracellular compartments. Increases plasma membrane cholesterol levels and decreases phosphatidylinositol-4,5-bisphosphate levels in the cell membrane. Binds phosphoinositides, such as phosphatidylinositol-4,5-bisphosphate. Exhibits strong binding to phosphatidic acid and weak binding to phosphatidylinositol 3-phosphate. Binds cholesterol, dehydroergosterol, 22(R)-hydroxycholesterol and 25-hydroxycholesterol (in vitro). The protein is Oxysterol-binding protein-related protein 2 (OSBPL2) of Homo sapiens (Human).